The primary structure comprises 88 residues: Small ribosomal subunit protein uS19 (88 aa).

The protein belongs to the universal ribosomal protein uS19 family.

Its function is as follows. Protein S19 forms a complex with S13 that binds strongly to the 16S ribosomal RNA. The chain is Small ribosomal subunit protein uS19 from Carsonella ruddii (strain PV).